The following is a 289-amino-acid chain: MASGFPPQKQETQPGIQHVMEPTPEFSSSNYKPSNKLHGKVALVTGGDSGIGKAVCHCYALEGASVAFTYVKGREDKDAEETLRLLHEVKTREAKEPIMIATDLGFEENCKRVVEEVVNSFGRIDVLVNCAAEQHEVSIEDIDEARLERVFRTNIFSQFFLVKYALKHMKEGSSIINTTSVVAYAGNSSLLEYTATKGAIVSFTRGLALQLAPKGIRVNGVAPGPVWTPLIPASFSEEAIKQFGSETPMKRAAQPVEVAPSYVFLACNHCSSYYTGQILHPNGGLIVNA.

The segment at 1-32 is disordered; sequence MASGFPPQKQETQPGIQHVMEPTPEFSSSNYK. 43 to 67 provides a ligand contact to NAD(+); sequence LVTGGDSGIGKAVCHCYALEGASVA. Ser-180 contacts substrate. The Proton acceptor role is filled by Tyr-193.

Belongs to the short-chain dehydrogenases/reductases (SDR) family.

May act as a short alcohol-polyol-sugar dehydrogenase possibly related to carbohydrate metabolism and the acquisition of desiccation tolerance. May also be involved in signal transduction. This chain is Glucose and ribitol dehydrogenase homolog 2, found in Arabidopsis thaliana (Mouse-ear cress).